Reading from the N-terminus, the 265-residue chain is uncharacterized protein (265 aa).

The interval 122–145 (THYRDNGQTPPRDTRPHGGISLGG) is disordered.

This is an uncharacterized protein from Zymomonas mobilis subsp. mobilis (strain ATCC 31821 / ZM4 / CP4).